We begin with the raw amino-acid sequence, 393 residues long: Flap endonuclease 1 (393 aa).

The N-domain stretch occupies residues 1–108; sequence MGILGLSKLL…SELQERRQRA (108 aa). Residue Asp34 participates in Mg(2+) binding. Arg74 is a binding site for DNA. 5 residues coordinate Mg(2+): Asp90, Glu162, Glu164, Asp183, and Asp185. The I-domain stretch occupies residues 126–257; the sequence is LMEKMSKRTV…QKAWEGIKKH (132 aa). Glu162 lines the DNA pocket. 2 residues coordinate DNA: Gly235 and Asp237. Asp237 contributes to the Mg(2+) binding site. The segment at 340 to 348 is interaction with PCNA; sequence TQGRLDQFF.

This sequence belongs to the XPG/RAD2 endonuclease family. FEN1 subfamily. Interacts with PCNA. Three molecules of FEN1 bind to one PCNA trimer with each molecule binding to one PCNA monomer. PCNA stimulates the nuclease activity without altering cleavage specificity. The cofactor is Mg(2+). In terms of processing, phosphorylated. Phosphorylation upon DNA damage induces relocalization to the nuclear plasma.

It is found in the nucleus. The protein localises to the nucleolus. The protein resides in the nucleoplasm. Its subcellular location is the mitochondrion. Its function is as follows. Structure-specific nuclease with 5'-flap endonuclease and 5'-3' exonuclease activities involved in DNA replication and repair. During DNA replication, cleaves the 5'-overhanging flap structure that is generated by displacement synthesis when DNA polymerase encounters the 5'-end of a downstream Okazaki fragment. It enters the flap from the 5'-end and then tracks to cleave the flap base, leaving a nick for ligation. Also involved in the long patch base excision repair (LP-BER) pathway, by cleaving within the apurinic/apyrimidinic (AP) site-terminated flap. Acts as a genome stabilization factor that prevents flaps from equilibrating into structures that lead to duplications and deletions. Also possesses 5'-3' exonuclease activity on nicked or gapped double-stranded DNA, and exhibits RNase H activity. Also involved in replication and repair of rDNA and in repairing mitochondrial DNA. In Trypanosoma cruzi (strain CL Brener), this protein is Flap endonuclease 1.